Reading from the N-terminus, the 145-residue chain is Large ribosomal subunit protein uL16 (145 aa).

The segment covering 1-17 (MLMPKRVKHRKVQRGRM) has biased composition (basic residues). The disordered stretch occupies residues 1 to 20 (MLMPKRVKHRKVQRGRMKGV).

It belongs to the universal ribosomal protein uL16 family. As to quaternary structure, part of the 50S ribosomal subunit.

Its function is as follows. Binds 23S rRNA and is also seen to make contacts with the A and possibly P site tRNAs. The chain is Large ribosomal subunit protein uL16 from Acetivibrio thermocellus (strain ATCC 27405 / DSM 1237 / JCM 9322 / NBRC 103400 / NCIMB 10682 / NRRL B-4536 / VPI 7372) (Clostridium thermocellum).